The primary structure comprises 351 residues: MKNKKRVFIASSLSCVLLLLSAANTEANSANKDSQDQTKKEHVDKAQQKEKRNVNDKDKNTPGPDDIGKNGKVTKRTVSEYDKETNILQNLQFDFIDDPTYDKNVLLVKKQGSIHSNLKFESHRNETNASWLKYPSEYHVDFQVQRNPKTEILDQLPKNKISTAKVDSTFSYSLGGKFDSTKGIGRTSSNSYSKSISYNQQNYDTIASGKNNNRHVHWSVVANDLKYGNEIKNRNDEFLFYRNTRLSTVENPELSFASKYRYPALVRSGFNPEFLTYISNEKSNEKTRFEVTYTRNQDILKNKPGIHYGQPILEQNKDGQRFIVVYEVDWKNKTVKVVEKYSDQNKPYKEG.

The first 32 residues, 1-32, serve as a signal peptide directing secretion; sequence MKNKKRVFIASSLSCVLLLLSAANTEANSANK. The segment at 26 to 74 is disordered; it reads EANSANKDSQDQTKKEHVDKAQQKEKRNVNDKDKNTPGPDDIGKNGKVT. The segment covering 33 to 60 has biased composition (basic and acidic residues); the sequence is DSQDQTKKEHVDKAQQKEKRNVNDKDKN.

It belongs to the aerolysin family.

This is an uncharacterized protein from Staphylococcus aureus (strain MRSA252).